Consider the following 399-residue polypeptide: Enolase (399 aa).

Residue glutamine 149 participates in (2R)-2-phosphoglycerate binding. Residue glutamate 191 is the Proton donor of the active site. Mg(2+) is bound by residues aspartate 227, glutamate 268, and aspartate 293. (2R)-2-phosphoglycerate contacts are provided by lysine 318, arginine 347, serine 348, and lysine 369. Residue lysine 318 is the Proton acceptor of the active site.

Belongs to the enolase family. Mg(2+) serves as cofactor.

The protein resides in the cytoplasm. Its subcellular location is the secreted. It is found in the cell surface. It carries out the reaction (2R)-2-phosphoglycerate = phosphoenolpyruvate + H2O. The protein operates within carbohydrate degradation; glycolysis; pyruvate from D-glyceraldehyde 3-phosphate: step 4/5. Its function is as follows. Catalyzes the reversible conversion of 2-phosphoglycerate (2-PG) into phosphoenolpyruvate (PEP). It is essential for the degradation of carbohydrates via glycolysis. This chain is Enolase, found in Archaeoglobus fulgidus (strain ATCC 49558 / DSM 4304 / JCM 9628 / NBRC 100126 / VC-16).